The sequence spans 356 residues: Protein-arginine kinase (356 aa).

Residues 22–249 (FRPISTLSLS…SKILSAETEA (228 aa)) enclose the Phosphagen kinase C-terminal domain. ATP contacts are provided by residues 25–29 (ISTLS), 172–176 (VARAF), and 202–207 (SSLLPL).

It belongs to the ATP:guanido phosphotransferase family.

The catalysed reaction is L-arginyl-[protein] + ATP = N(omega)-phospho-L-arginyl-[protein] + ADP + H(+). Its function is as follows. Catalyzes the specific phosphorylation of arginine residues in proteins. The chain is Protein-arginine kinase from Chlamydia muridarum (strain MoPn / Nigg).